Consider the following 367-residue polypeptide: tRNA/tmRNA (uracil-C(5))-methyltransferase (367 aa).

Residues Gln190, Tyr218, Asn223, Glu239, and Asp299 each coordinate S-adenosyl-L-methionine. Cys324 acts as the Nucleophile in catalysis. Glu358 serves as the catalytic Proton acceptor.

Belongs to the class I-like SAM-binding methyltransferase superfamily. RNA M5U methyltransferase family. TrmA subfamily.

The catalysed reaction is uridine(54) in tRNA + S-adenosyl-L-methionine = 5-methyluridine(54) in tRNA + S-adenosyl-L-homocysteine + H(+). It carries out the reaction uridine(341) in tmRNA + S-adenosyl-L-methionine = 5-methyluridine(341) in tmRNA + S-adenosyl-L-homocysteine + H(+). Dual-specificity methyltransferase that catalyzes the formation of 5-methyluridine at position 54 (m5U54) in all tRNAs, and that of position 341 (m5U341) in tmRNA (transfer-mRNA). This is tRNA/tmRNA (uracil-C(5))-methyltransferase from Yersinia enterocolitica serotype O:8 / biotype 1B (strain NCTC 13174 / 8081).